The chain runs to 159 residues: MRIGHGFDVHAFGGEGPIIIGGVRIPYEKGLLAHSDGDVALHALTDALLGAAALGDIGKLFPDTDPAFKGADSRELLREAWRRIQAKGYTLGNVDVTIIAQAPKMLPHIPQMRVFIAEDLGCHMDDVNVKATTTEKLGFTGRGEGIACEAVALLIKATK.

2 residues coordinate a divalent metal cation: aspartate 8 and histidine 10. 4-CDP-2-C-methyl-D-erythritol 2-phosphate contacts are provided by residues aspartate 8–histidine 10 and histidine 34–serine 35. Histidine 42 contacts a divalent metal cation. 4-CDP-2-C-methyl-D-erythritol 2-phosphate-binding positions include aspartate 56–glycine 58, phenylalanine 61–aspartate 65, alanine 100–leucine 106, threonine 132–glutamate 135, phenylalanine 139, and arginine 142.

It belongs to the IspF family. As to quaternary structure, homotrimer. The cofactor is a divalent metal cation.

The catalysed reaction is 4-CDP-2-C-methyl-D-erythritol 2-phosphate = 2-C-methyl-D-erythritol 2,4-cyclic diphosphate + CMP. It functions in the pathway isoprenoid biosynthesis; isopentenyl diphosphate biosynthesis via DXP pathway; isopentenyl diphosphate from 1-deoxy-D-xylulose 5-phosphate: step 4/6. In terms of biological role, involved in the biosynthesis of isopentenyl diphosphate (IPP) and dimethylallyl diphosphate (DMAPP), two major building blocks of isoprenoid compounds. Catalyzes the conversion of 4-diphosphocytidyl-2-C-methyl-D-erythritol 2-phosphate (CDP-ME2P) to 2-C-methyl-D-erythritol 2,4-cyclodiphosphate (ME-CPP) with a corresponding release of cytidine 5-monophosphate (CMP). This is 2-C-methyl-D-erythritol 2,4-cyclodiphosphate synthase from Escherichia coli O139:H28 (strain E24377A / ETEC).